The primary structure comprises 221 residues: 7-cyano-7-deazaguanine synthase (221 aa).

An ATP-binding site is contributed by 9–19; the sequence is YSGGMDSFTVL. The Zn(2+) site is built by Cys-186, Cys-194, Cys-197, and Cys-200.

Belongs to the QueC family. It depends on Zn(2+) as a cofactor.

It carries out the reaction 7-carboxy-7-deazaguanine + NH4(+) + ATP = 7-cyano-7-deazaguanine + ADP + phosphate + H2O + H(+). Its pathway is purine metabolism; 7-cyano-7-deazaguanine biosynthesis. Its function is as follows. Catalyzes the ATP-dependent conversion of 7-carboxy-7-deazaguanine (CDG) to 7-cyano-7-deazaguanine (preQ(0)). This is 7-cyano-7-deazaguanine synthase from Psychromonas ingrahamii (strain DSM 17664 / CCUG 51855 / 37).